A 152-amino-acid polypeptide reads, in one-letter code: tRNA-specific adenosine deaminase (152 aa).

The CMP/dCMP-type deaminase domain maps to 2-111; it reads AERTHFMELA…AQDPKGGAVE (110 aa). Histidine 53 serves as a coordination point for Zn(2+). The active-site Proton donor is glutamate 55. Zn(2+) is bound by residues cysteine 83 and cysteine 86.

The protein belongs to the cytidine and deoxycytidylate deaminase family. As to quaternary structure, homodimer. The cofactor is Zn(2+).

The catalysed reaction is adenosine(34) in tRNA + H2O + H(+) = inosine(34) in tRNA + NH4(+). Catalyzes the deamination of adenosine to inosine at the wobble position 34 of tRNA(Arg2). This Agrobacterium fabrum (strain C58 / ATCC 33970) (Agrobacterium tumefaciens (strain C58)) protein is tRNA-specific adenosine deaminase.